The sequence spans 101 residues: ATP-dependent Clp protease adapter protein ClpS (101 aa).

It belongs to the ClpS family. In terms of assembly, binds to the N-terminal domain of the chaperone ClpA.

Functionally, involved in the modulation of the specificity of the ClpAP-mediated ATP-dependent protein degradation. The polypeptide is ATP-dependent Clp protease adapter protein ClpS (Corynebacterium jeikeium (strain K411)).